A 403-amino-acid chain; its full sequence is RUN domain-containing protein 3B (403 aa).

Residues 1–20 (MASRSLGGLSGSRGGGKKSL) are disordered. Omega-N-methylarginine is present on Arg13. An RUN domain is found at 53–185 (DDSSPEFNNF…IDFSFCLKGE (133 aa)). Positions 207-232 (SDSISSDEEELRTFGSSDSEGSTPEN) are disordered. Phosphoserine is present on residues Ser211 and Ser212. Residues 220–231 (FGSSDSEGSTPE) show a composition bias toward polar residues. The stretch at 296–321 (AHKLEKEQLEYIIVELQDQLKSYQSL) forms a coiled coil.

It belongs to the RUNDC3 family. As to quaternary structure, interacts with RAP2A.

This Rattus norvegicus (Rat) protein is RUN domain-containing protein 3B (Rundc3b).